Reading from the N-terminus, the 1039-residue chain is DIS3-like exonuclease 1 (1039 aa).

The CSD1 domain occupies 221 to 309 (PEHLPLEILE…KGRNGALCEN (89 aa)). The CSD2 domain occupies 359-425 (VLVMPWDYRI…AEIATILVEN (67 aa)). One can recognise an RNB domain in the interval 458-807 (RLDLRKTHLV…VHRLLLAAVN (350 aa)).

The protein belongs to the RNR ribonuclease family. In terms of assembly, component of the RNA exosome complex. Requires Mg(2+) as cofactor.

The protein localises to the cytoplasm. It carries out the reaction Exonucleolytic cleavage in the 3'- to 5'-direction to yield nucleoside 5'-phosphates.. Its function is as follows. Catalytic component of the RNA exosome complex which has 3'-&gt;5' exoribonuclease activity and participates in a multitude of cellular RNA processing and degradation events. The polypeptide is DIS3-like exonuclease 1 (dis3l) (Xenopus tropicalis (Western clawed frog)).